The sequence spans 493 residues: F(420)H(2) dehydrogenase subunit N (493 aa).

The next 14 helical transmembrane spans lie at L7 to L27, I34 to F54, L78 to I98, T107 to A127, L130 to F150, F165 to A185, P205 to V225, A244 to I264, W273 to V293, A310 to M330, L333 to I353, A381 to M401, F404 to L424, and I454 to L474.

Belongs to the complex I subunit 2 family. As to quaternary structure, the FPO complex is composed of at least 13 different subunits. FpoA, FpoH, FpoJ, FpoK, FpoL, FpoM and FpoN proteins constitute the membrane sector of the complex.

The protein localises to the cell membrane. The enzyme catalyses methanophenazine + reduced coenzyme F420-(gamma-L-Glu)(n) = dihydromethanophenazine + oxidized coenzyme F420-(gamma-L-Glu)(n) + H(+). Functionally, component of the F(420)H(2) dehydrogenase (FPO complex) which is part of the energy-conserving F(420)H(2):heterodisulfide oxidoreductase system. The membrane-bound electron transfer system of the complex plays an important role in the metabolism of methylotrophic methanogens when the organisms grow on methanol or methylamines. Catalyzes the oxidation of methanophenazine to dihydromethanophenazine. It shuttles electrons from F(420)H(2), via FAD and iron-sulfur (Fe-S) centers, to methanophenazine (an electron carrier in the membrane). It couples the redox reaction to proton translocation (for every two electrons transferred, two hydrogen ions are translocated across the cytoplasmic membrane), and thus conserves the redox energy in a proton gradient. It also catalyzes the oxidation of F(420)H(2) with quinones such as 2,3-dimethyl-1,4-naphthoquinone, 2-methyl-1,4-naphthoquinone and tetramethyl-p-benzoquinone. This chain is F(420)H(2) dehydrogenase subunit N (fpoN), found in Methanosarcina mazei (strain ATCC BAA-159 / DSM 3647 / Goe1 / Go1 / JCM 11833 / OCM 88) (Methanosarcina frisia).